The following is a 418-amino-acid chain: MLQLIATPSNALADEPVSIRAIGLPPSQIVTITATVKDEKENLFQSKAFYKANEAGEVDLEQASALGGDYVGVHPMGLFCCLKPKRAFQRLIKKDVMNSPLCICLDLYDSVCWLETVRIPPKASQIVHRWFAGPGVKREQIREGRVRGALFLPPGKGPFPGIIDLFGSIGGLVEFRASLLASRGFAVLALAYFAYEDLPKVLLEEDLDYFEEAANFLLAHPKIQQPGIGVISVSKGAEIGLAMACYLKQVVATVCINGPSAIFDFPLKYRDLVVTPMRLAFEKIQFHGSGAACFRHCWDPQNMLNPPKILPVEKAQGKILFIVGENDQCLASKLHAQRAMDRLRSHGRSSGRMLAYPGAGHLIEPPYSPFCFACWDSVLGKPMLWGGDPIAHAAAQVHSWREIQKFFRQHLLQSGGKL.

Catalysis depends on charge relay system residues Ser234, Asp327, and His361. The Microbody targeting signal signature appears at 416–418 (GKL).

It belongs to the C/M/P thioester hydrolase family.

Its subcellular location is the peroxisome. Acyltransferase which efficiently conjugates very long-chain and long-chain fatty acids to taurine. Shows no conjugation activity in the presence of glycine. This chain is Acyl-coenzyme A amino acid N-acyltransferase 2, found in Rattus norvegicus (Rat).